The following is a 228-amino-acid chain: DOPA 4,5-dioxygenase (228 aa).

In terms of assembly, homodimer. In terms of tissue distribution, expressed at high level in coloured cap tissue and at least 10 times lower level in the stipe.

It is found in the cytoplasm. Its pathway is pigment biosynthesis; betalain biosynthesis. Extradiol dioxygenase that opens up the cyclic ring of DOPA between carbons 4 and 5 thus producing an unstable seco-DOPA that rearranges non-enzymatically to betalamic acid. Can also catalyze the formation of muscaflavin (a pigment found in the hygrocybe mushrooms family and of some amanita species only) by a 2,3-extradiol cleavage of DOPA. The protein is DOPA 4,5-dioxygenase (DODA) of Amanita muscaria (Fly agaric).